The sequence spans 274 residues: F-box protein SKIP5 (274 aa).

The F-box domain occupies 32-79; sequence LTSLNNLDDGCLMHILSFLSPIPDRYNTALVCHRWRYLACHPRLWLRV.

In terms of assembly, part of a SCF (SKP1-cullin-F-box) protein ligase complex. Interacts with SKP1A/ASK1.

The protein operates within protein modification; protein ubiquitination. The sequence is that of F-box protein SKIP5 (SKIP5) from Arabidopsis thaliana (Mouse-ear cress).